A 356-amino-acid polypeptide reads, in one-letter code: Glutamine synthetase cytosolic isozyme 1-4 (356 aa).

Ser2 bears the N-acetylserine mark. Phosphoserine is present on residues Ser2 and Ser48. In terms of domain architecture, GS beta-grasp spans 19–99 (IIAEYIWIGG…VMCDAYTPAG (81 aa)). The disordered stretch occupies residues 37–66 (ARTLPGPVTDPSQLPKWNYDGSSTGQAPGD). In terms of domain architecture, GS catalytic spans 106–356 (KRHAAAKIFE…IAESTILWKP (251 aa)).

This sequence belongs to the glutamine synthetase family. In terms of assembly, homooctamer. Interacts with GRF3. In terms of tissue distribution, expressed in the pericycle in the region of lateral root emergence.

It localises to the cytoplasm. The enzyme catalyses L-glutamate + NH4(+) + ATP = L-glutamine + ADP + phosphate + H(+). In terms of biological role, high-affinity glutamine synthetase. May contribute to the homeostatic control of glutamine synthesis in roots. The polypeptide is Glutamine synthetase cytosolic isozyme 1-4 (Arabidopsis thaliana (Mouse-ear cress)).